A 397-amino-acid polypeptide reads, in one-letter code: MGKENQQGYFGEFGGRYSPEILHDALVELETTYKKLKKNKHFKKELEYYRKNYIGRPSPLTYAERLSKVWGGAKIWLKREDLNHTGAHKINNTIGQVLIAKAMGKTRIIAETGAGQHGVATATVGAMFQMETVVYMGEEDLRRQELNAIRMRMLGAKVVGVSSGTATLKDATSEAMRDWALNVSNTHYIVGSSIGPHPFPTIVRDFQSVIGIESRKQFKKVNDKLPNAVIACVGGGSNAIGMFYGFIQDKKVKLFGVEAGGYSSDPGSHSATIQFGRTGFLHGTKTLVIQDDFGQIVPAHSVSAGLDYPGVGPEHAYFHKSGRVEYVNVDDEGALDAFIEVCRIEGIIPALETAHAFRYAKDLARTMSKKENILICLSGRGDKDVAEVSRLRKGEFI.

Lys-89 bears the N6-(pyridoxal phosphate)lysine mark.

Belongs to the TrpB family. Tetramer of two alpha and two beta chains. Requires pyridoxal 5'-phosphate as cofactor.

The catalysed reaction is (1S,2R)-1-C-(indol-3-yl)glycerol 3-phosphate + L-serine = D-glyceraldehyde 3-phosphate + L-tryptophan + H2O. It participates in amino-acid biosynthesis; L-tryptophan biosynthesis; L-tryptophan from chorismate: step 5/5. Its function is as follows. The beta subunit is responsible for the synthesis of L-tryptophan from indole and L-serine. In Leptospira interrogans serogroup Icterohaemorrhagiae serovar copenhageni (strain Fiocruz L1-130), this protein is Tryptophan synthase beta chain.